Reading from the N-terminus, the 122-residue chain is Serum amyloid A-1 protein (122 aa).

A signal peptide spans 1 to 18 (MKPFVAIIFCFLILGVDS). The segment at 19–45 (QRWFQFMKEAGQGTRDMWRAYTDMREA) is important for amyloid formation. Residues 100–122 (ANEWGRSGKDPNFFRPPGLPSKY) form a disordered region.

This sequence belongs to the SAA family. As to quaternary structure, homohexamer; dimer of trimers. Can form amyloid fibrils after partial proteolysis; the native, undenatured protein does not form amyloid fibrils (in vitro). Apolipoprotein of the HDL complex. Binds to heparin. Detected in liver, spleen and kidney.

The protein resides in the secreted. Functionally, major acute phase protein. This chain is Serum amyloid A-1 protein (SAA1), found in Mesocricetus auratus (Golden hamster).